Consider the following 308-residue polypeptide: 4-hydroxy-tetrahydrodipicolinate synthase (308 aa).

Thr56 provides a ligand contact to pyruvate. The active-site Proton donor/acceptor is the Tyr144. Lys172 functions as the Schiff-base intermediate with substrate in the catalytic mechanism. Val212 lines the pyruvate pocket.

It belongs to the DapA family. As to quaternary structure, homotetramer; dimer of dimers.

Its subcellular location is the cytoplasm. It catalyses the reaction L-aspartate 4-semialdehyde + pyruvate = (2S,4S)-4-hydroxy-2,3,4,5-tetrahydrodipicolinate + H2O + H(+). Its pathway is amino-acid biosynthesis; L-lysine biosynthesis via DAP pathway; (S)-tetrahydrodipicolinate from L-aspartate: step 3/4. Functionally, catalyzes the condensation of (S)-aspartate-beta-semialdehyde [(S)-ASA] and pyruvate to 4-hydroxy-tetrahydrodipicolinate (HTPA). The polypeptide is 4-hydroxy-tetrahydrodipicolinate synthase (Kineococcus radiotolerans (strain ATCC BAA-149 / DSM 14245 / SRS30216)).